Consider the following 227-residue polypeptide: Large ribosomal subunit protein bL25 (227 aa).

It belongs to the bacterial ribosomal protein bL25 family. CTC subfamily. Part of the 50S ribosomal subunit; part of the 5S rRNA/L5/L18/L25 subcomplex. Contacts the 5S rRNA. Binds to the 5S rRNA independently of L5 and L18.

Its function is as follows. This is one of the proteins that binds to the 5S RNA in the ribosome where it forms part of the central protuberance. The polypeptide is Large ribosomal subunit protein bL25 (Polaromonas sp. (strain JS666 / ATCC BAA-500)).